A 431-amino-acid chain; its full sequence is Enolase (431 aa).

Gln164 serves as a coordination point for (2R)-2-phosphoglycerate. The Proton donor role is filled by Glu206. Mg(2+)-binding residues include Asp243, Glu286, and Asp313. (2R)-2-phosphoglycerate-binding residues include Lys338, Arg367, Ser368, and Lys389. Residue Lys338 is the Proton acceptor of the active site.

It belongs to the enolase family. Mg(2+) is required as a cofactor.

The protein resides in the cytoplasm. The protein localises to the secreted. It localises to the cell surface. The enzyme catalyses (2R)-2-phosphoglycerate = phosphoenolpyruvate + H2O. Its pathway is carbohydrate degradation; glycolysis; pyruvate from D-glyceraldehyde 3-phosphate: step 4/5. In terms of biological role, catalyzes the reversible conversion of 2-phosphoglycerate (2-PG) into phosphoenolpyruvate (PEP). It is essential for the degradation of carbohydrates via glycolysis. This chain is Enolase, found in Chloroflexus aggregans (strain MD-66 / DSM 9485).